The following is a 457-amino-acid chain: tRNA-2-methylthio-N(6)-dimethylallyladenosine synthase (457 aa).

Positions 19–134 constitute an MTTase N-terminal domain; sequence RKLFIETYGC…LPNLVGAVEH (116 aa). C28, C64, C98, C172, C176, and C179 together coordinate [4Fe-4S] cluster. One can recognise a Radical SAM core domain in the interval 158 to 390; it reads PGVHISGFVS…IDLQNKLSEE (233 aa). The TRAM domain maps to 393–456; it reads LRDIGKTFEV…SATLFGEPVE (64 aa).

It belongs to the methylthiotransferase family. MiaB subfamily. Monomer. It depends on [4Fe-4S] cluster as a cofactor.

It localises to the cytoplasm. The catalysed reaction is N(6)-dimethylallyladenosine(37) in tRNA + (sulfur carrier)-SH + AH2 + 2 S-adenosyl-L-methionine = 2-methylsulfanyl-N(6)-dimethylallyladenosine(37) in tRNA + (sulfur carrier)-H + 5'-deoxyadenosine + L-methionine + A + S-adenosyl-L-homocysteine + 2 H(+). Catalyzes the methylthiolation of N6-(dimethylallyl)adenosine (i(6)A), leading to the formation of 2-methylthio-N6-(dimethylallyl)adenosine (ms(2)i(6)A) at position 37 in tRNAs that read codons beginning with uridine. This Parabacteroides distasonis (strain ATCC 8503 / DSM 20701 / CIP 104284 / JCM 5825 / NCTC 11152) protein is tRNA-2-methylthio-N(6)-dimethylallyladenosine synthase.